Here is a 1550-residue protein sequence, read N- to C-terminus: Adhesion G protein-coupled receptor L3 (1550 aa).

A signal peptide spans 1 to 19; that stretch reads MCPPQLFILMMLLAPVVHG. Residues 20–948 are Extracellular-facing; sequence GKHNERHPAL…VHDLLLDVIT (929 aa). The segment at 34–80 is disordered; that stretch reads RHAEHSPGGPLPPRHLLQQPAAERSTAHRGQGPRGTARGVRGPGAPG. One can recognise an SUEL-type lectin domain in the interval 103–192; that stretch reads SCESYPIELR…KYLEVQYECV (90 aa). 5 cysteine pairs are disulfide-bonded: Cys104–Cys134, Cys113–Cys191, Cys146–Cys178, Cys159–Cys165, and Cys203–Cys385. Asn161 is a glycosylation site (N-linked (GlcNAc...) asparagine). In terms of domain architecture, Olfactomedin-like spans 202 to 461; sequence LCPGLLKGVY…VVKYSLDFGP (260 aa). Positions 317-347 are interaction with FLRT3; that stretch reads YHDTSPYRWGGKSDIDLAVDENGLWVIYATE. Asp332, Asn380, Ala381, and Val435 together coordinate Ca(2+). The tract at residues 518-538 is disordered; the sequence is NLGRSTTPSLPGRRNRSTSTP. 5 N-linked (GlcNAc...) asparagine glycosylation sites follow: Asn532, Asn616, Asn839, Asn884, and Asn910. The region spanning 755–934 is the GAIN-B domain; the sequence is DIVRENTDNI…AVLMAHVEVK (180 aa). Cystine bridges form between Cys885–Cys916 and Cys904–Cys918. The segment at 885-934 is GPS; it reads CSFWSYSKRTMTGYWSTQGCRLLTTNKTHTTCSCNHLTNFAVLMAHVEVK. Residues 922–938 are stachel; sequence TNFAVLMAHVEVKHSDA. Residues 949–969 traverse the membrane as a helical segment; sequence WVGILLSLVCLLICIFTFCFF. The Cytoplasmic portion of the chain corresponds to 970-977; the sequence is RGLQSDRN. Residues 978–998 form a helical membrane-spanning segment; sequence TIHKNLCISLFVAELLFLIGI. Asn999 carries N-linked (GlcNAc...) asparagine glycosylation. At 999 to 1006 the chain is on the extracellular side; the sequence is NRTDQPIA. The chain crosses the membrane as a helical span at residues 1007 to 1027; the sequence is CAVFAALLHFFFLAAFTWMFL. At 1028-1048 the chain is on the cytoplasmic side; sequence EGVQLYIMLVEVFESEHSRRK. Residues 1049–1069 form a helical membrane-spanning segment; it reads YFYLVGYGMPALIVAVSAAVD. The Extracellular portion of the chain corresponds to 1070–1087; sequence YRSYGTDKVCWLRLDTYF. The chain crosses the membrane as a helical span at residues 1088-1108; the sequence is IWSFIGPATLIIMLNVIFLGI. Residues 1109 to 1141 lie on the Cytoplasmic side of the membrane; the sequence is ALYKMFHHTAILKPESGCLDNINYEDNRPFIKS. Residues 1142–1162 form a helical membrane-spanning segment; the sequence is WVIGAIALLCLLGLTWAFGLM. Residues 1163 to 1168 are Extracellular-facing; sequence YINEST. Residue Asn1165 is glycosylated (N-linked (GlcNAc...) asparagine). A helical transmembrane segment spans residues 1169-1189; that stretch reads VIMAYLFTIFNSLQGMFIFIF. At 1190–1550 the chain is on the cytoplasmic side; the sequence is HCVLQKKVRK…KGPAHLVTSL (361 aa). The interval 1213-1236 is disordered; sequence KSTESSIGSGKTSGSRTPGRYSTG. A Phosphoserine modification is found at Ser1253. Disordered regions lie at residues 1410-1435 and 1528-1550; these read LLPP…PQDH and PPNK…VTSL. Ser1535 carries the phosphoserine modification. The short motif at 1545–1550 is the PDZ-binding element; it reads HLVTSL.

The protein belongs to the G-protein coupled receptor 2 family. LN-TM7 subfamily. Heterodimer of 2 chains generated by proteolytic processing; the large extracellular N-terminal fragment and the membrane-bound C-terminal fragment predominantly remain associated and non-covalently linked. Interacts (via olfactomedin-like domain) with FLRT1 (via extracellular domain). Interacts (via olfactomedin-like domain) with FLRT2 (via extracellular domain). Interacts (via olfactomedin-like domain) with FLRT3 (via extracellular domain); the interaction is direct. Interacts (via extracellular domain) with TENM1. Interacts (via extracellular domain) with TENM2. Interacts (via extracellular domain) with TENM3. Identified in a complex with FLRT3 and UNC5B; does not interact with UNC5B by itself. Identified in a complex with FLRT3 and UNC5D; does not interact with UNC5D by itself. In terms of assembly, interacts (via PDZ-binding motif) with SHANK3. Interacts (via PDZ-binding motif) with DLG4. Post-translationally, autoproteolytically processed at the GPS region of the GAIN-B domain; this cleavage modulates receptor activity. Predominantly expressed in brain, followed by heart, placenta, pancreas, kidney and testis.

Its subcellular location is the cell membrane. The protein localises to the postsynaptic cell membrane. It is found in the cell projection. It localises to the axon. The protein resides in the cell junction. Forms a heterodimer of 2 chains generated by proteolytic processing that remain associated through non-covalent interactions mediated by the GAIN-B domain. In the inactivated receptor, the Stachel sequence (also named stalk) is embedded in the GAIN-B domain, where it adopts a beta-strand conformation. On activation, the Stachel moves into the 7 transmembrane region and adopts a twisted hook-shaped configuration that forms contacts within the receptor, leading to coupling of a G-alpha protein, which activates signaling. The cleaved GAIN-B and N-terminal domains can then dissociate from the rest of the receptor. Orphan adhesion G-protein coupled receptor (aGPCR), which mediates synapse specificity. Ligand binding causes a conformation change that triggers signaling via guanine nucleotide-binding proteins (G proteins) and modulates the activity of downstream effectors. ADGRL3 is coupled with different classes of G alpha proteins, such as G(12)/G(13), G(s), G(i) or G(q), depending on the context. Coupling to G(12)/G(13) G proteins, which mediates the activation Rho small GTPases is the most efficient. Following G-protein coupled receptor activation, associates with cell adhesion molecules that are expressed at the surface of adjacent cells to direct synapse specificity. Specifically mediates the establishment of Schaffer-collateral synapses formed by CA3-region axons on CA1-region pyramidal neurons in the hippocampus. Localizes to postsynaptic spines in excitatory synapses in the S.oriens and S.radiatum and interacts with presynaptic cell adhesion molecules FLRT3 and TENM2, promoting synapse formation. Plays a role in the development of glutamatergic synapses in the cortex. Important in determining the connectivity rates between the principal neurons in the cortex. Functionally, orphan adhesion G-protein coupled receptor (aGPCR), which mediates synapse specificity. Ligand binding causes a conformation change that triggers signaling via guanine nucleotide-binding proteins (G proteins) and modulates the activity of downstream effectors, such as adenylate cyclase. Isoform 1 is specifically coupled to G(s) G proteins and mediates activation of adenylate cyclase activity. Following G-protein coupled receptor activation, undergoes liquid-liquid phase transition, associates with (1) cell adhesion molecules that are expressed at the surface of adjacent cells, as well as (2) PDZ-containing proteins, such as SHANK3 and DLG4, in the cytoplasm to direct synapse formation. The chain is Adhesion G protein-coupled receptor L3 from Rattus norvegicus (Rat).